We begin with the raw amino-acid sequence, 487 residues long: uncharacterized protein (487 aa).

A helical membrane pass occupies residues 7-28 (HVISIFETLGAYFINIFYNFLY). Residues asparagine 73, asparagine 83, and asparagine 195 are each glycosylated (N-linked (GlcNAc...) asparagine; by host). The stretch at 196-235 (RSLLHQIEELTSEKKSLLADLSTLRKKYEKRQSEYRRLVQ) forms a coiled coil. Residues 294 to 305 (TSQELTSKSPNN) are compositionally biased toward polar residues. Positions 294–324 (TSQELTSKSPNNYPVPHSRTIVSKPSDNYPV) are disordered. N-linked (GlcNAc...) asparagine; by host glycosylation occurs at asparagine 462.

This sequence belongs to the asfivirus B475L family.

The protein resides in the host membrane. This is an uncharacterized protein from African swine fever virus (isolate Tick/South Africa/Pretoriuskop Pr4/1996) (ASFV).